The sequence spans 218 residues: IVGGTDAPRGKYPYQVSLRAPKHFCGGSISKRYVLTAAHCLVGKSKHQVTVHAGSVLLNKEEAVYNAEELIVNKNYNSIRLINDIGLIRVSKDISYTQLVQPVKLPVSNTIKAGDPVVLTGWGRIYVNGPIPNNLQQITLSIVNQQTCKFKHWGLTDSQICTFTKLGEGACDGDSGGPLVANGVQIGIVSYGHPCAVGSPNVFTRVYSFLDWIQKNQL.

Residues 1-218 form the Peptidase S1 domain; the sequence is IVGGTDAPRG…FLDWIQKNQL (218 aa). A disulfide bridge connects residues Cys-25 and Cys-40. Catalysis depends on charge relay system residues His-39 and Asp-84. Intrachain disulfides connect Cys-148–Cys-161 and Cys-171–Cys-195. Ser-175 functions as the Charge relay system in the catalytic mechanism.

It belongs to the peptidase S1 family.

The protein resides in the secreted. The protein localises to the extracellular space. It carries out the reaction Preferential cleavage: Tyr-|-Xaa, Trp-|-Xaa, Phe-|-Xaa, Leu-|-Xaa.. The protein is Chymotrypsin-2 of Vespa crabro (European hornet).